The following is a 367-amino-acid chain: Probable butyrate kinase (367 aa).

This sequence belongs to the acetokinase family.

Its subcellular location is the cytoplasm. It catalyses the reaction butanoate + ATP = butanoyl phosphate + ADP. This Bacillus anthracis (strain A0248) protein is Probable butyrate kinase.